The chain runs to 162 residues: MTIINKTAQTLFLTELVKGMSLTLDYFFRKKVTLNYPFEKGPLSPRFRGEHALRRYQTGEERCIACKLCEAICPAQAITIESEPRIDGSRRTTRYDIDMTKCIYCGFCQEACPVDAIVEGPNFEFATETHEELLYDKEKLLQNGDRWETEIAANLANEALYR.

2 4Fe-4S ferredoxin-type domains span residues Arg-54–Glu-83 and Thr-93–Asn-122. The [4Fe-4S] cluster site is built by Cys-63, Cys-66, Cys-69, Cys-73, Cys-102, Cys-105, Cys-108, and Cys-112.

This sequence belongs to the complex I 23 kDa subunit family. [4Fe-4S] cluster is required as a cofactor.

It is found in the mitochondrion. The enzyme catalyses a ubiquinone + NADH + 5 H(+)(in) = a ubiquinol + NAD(+) + 4 H(+)(out). Functionally, core subunit of the mitochondrial membrane respiratory chain NADH dehydrogenase (Complex I) that is believed to belong to the minimal assembly required for catalysis. Complex I functions in the transfer of electrons from NADH to the respiratory chain. The immediate electron acceptor for the enzyme is believed to be ubiquinone. May donate electrons to ubiquinone. This chain is NADH-ubiquinone oxidoreductase subunit 8 (NAD8), found in Reclinomonas americana.